The chain runs to 194 residues: BCL2/adenovirus E1B 19 kDa protein-interacting protein 3 (194 aa).

The tract at residues 1–102 is disordered; that stretch reads MSQNGAPGMQ…SQSEEDDIER (102 aa). Over residues 42-55 the composition is skewed to basic and acidic residues; sequence DMEKILLDAQHESG. Phosphoserine is present on residues serine 54, serine 66, serine 86, serine 92, and serine 95. Over residues 56 to 69 the composition is skewed to low complexity; sequence RSSSKSSHCDSPPR. Positions 78 to 88 are enriched in basic and acidic residues; the sequence is RASETDTHSIG. Positions 100 to 125 match the BH3 motif; the sequence is IERRKEVESILKKNSDWIWDWSSRPE. The helical transmembrane segment at 164-184 threads the bilayer; the sequence is VFLPSLLLSHLLAIGLGIYIG.

Belongs to the NIP3 family. Homodimer. Binds to BCL2. Interacts with BNIP3L and ACAA2. Interacts (via BH3 domain) with SPATA18 (via coiled-coil domains). Interacts with BOK; promotes BOK oligomerization. Interacts with PPTC7; this interaction promotes BNIP3 degradation. As to quaternary structure, (Microbial infection) Interacts with adenovirus E1B 19 kDa protein. In terms of assembly, (Microbial infection) Interacts with Epstein-Barr virus BHRF1.

The protein localises to the mitochondrion. The protein resides in the mitochondrion outer membrane. Functionally, apoptosis-inducing protein that can overcome BCL2 suppression. May play a role in repartitioning calcium between the two major intracellular calcium stores in association with BCL2. Involved in mitochondrial quality control via its interaction with SPATA18/MIEAP: in response to mitochondrial damage, participates in mitochondrial protein catabolic process (also named MALM) leading to the degradation of damaged proteins inside mitochondria. The physical interaction of SPATA18/MIEAP, BNIP3 and BNIP3L/NIX at the mitochondrial outer membrane regulates the opening of a pore in the mitochondrial double membrane in order to mediate the translocation of lysosomal proteins from the cytoplasm to the mitochondrial matrix. Plays an important role in the calprotectin (S100A8/A9)-induced cell death pathway. This Homo sapiens (Human) protein is BCL2/adenovirus E1B 19 kDa protein-interacting protein 3.